Here is a 1242-residue protein sequence, read N- to C-terminus: ATP-dependent RNA helicase DHX8 (1242 aa).

Disordered regions lie at residues 75-283 and 354-449; these read RPSR…DDPE and SMKE…GLLP. Basic and acidic residues-rich tracts occupy residues 87–97, 113–141, and 180–196; these read TVGDKKEDKKS, YSKKEESDDDEKVKAKPEKHSETHKKTDM, and RDRDTKRRSRSREDRHS. Composition is skewed to basic residues over residues 197 to 222 and 232 to 252; these read DRRRSRSRDKERRRRSRSRDNRRRSR and DRRHKSSSSRDHHERRRRSRS. A compositionally biased stretch (basic and acidic residues) spans 253–269; that stretch reads RSTERRDRRDRSRDCSE. The region spanning 285-356 is the S1 motif domain; that stretch reads GKIYSGKIAN…TGQKVSLSMK (72 aa). Positions 388 to 399 are enriched in polar residues; the sequence is FSSSTSMLNLQG. A compositionally biased stretch (acidic residues) spans 439–449; sequence PDFDEETGLLP. The region spanning 596 to 759 is the Helicase ATP-binding domain; it reads IKAVTDNQIL…FFKAPIFTIP (164 aa). ATP is bound at residue 609–616; sequence GETGSGKT. A DEAH box motif is present at residues 706–709; it reads DEAH. The 181-residue stretch at 777-957 folds into the Helicase C-terminal domain; that stretch reads YLDASLITVM…TTVLQLKTMG (181 aa).

Belongs to the DEAD box helicase family. DEAH subfamily. DDX8/PRP22 sub-subfamily. In terms of assembly, identified in the spliceosome C complex.

Its subcellular location is the nucleus. The catalysed reaction is ATP + H2O = ADP + phosphate + H(+). Involved in pre-mRNA splicing as component of the spliceosome. Facilitates nuclear export of spliced mRNA by releasing the RNA from the spliceosome. Before and after egg-chamber formation, required for nurse-cell chromatin dispersal (NCCD) probably by playing a role in spliceosome localization to chromatin/interchromatin spaces. This Drosophila melanogaster (Fruit fly) protein is ATP-dependent RNA helicase DHX8.